The chain runs to 154 residues: 6,7-dimethyl-8-ribityllumazine synthase (154 aa).

Residues Trp22, 56 to 58 (AWE), and 80 to 82 (CVI) contribute to the 5-amino-6-(D-ribitylamino)uracil site. Residue 85–86 (DT) coordinates (2S)-2-hydroxy-3-oxobutyl phosphate. His88 acts as the Proton donor in catalysis. Residue Asn113 coordinates 5-amino-6-(D-ribitylamino)uracil. Residue Arg127 participates in (2S)-2-hydroxy-3-oxobutyl phosphate binding.

The protein belongs to the DMRL synthase family. In terms of assembly, forms an icosahedral capsid composed of 60 subunits, arranged as a dodecamer of pentamers.

It catalyses the reaction (2S)-2-hydroxy-3-oxobutyl phosphate + 5-amino-6-(D-ribitylamino)uracil = 6,7-dimethyl-8-(1-D-ribityl)lumazine + phosphate + 2 H2O + H(+). Its pathway is cofactor biosynthesis; riboflavin biosynthesis; riboflavin from 2-hydroxy-3-oxobutyl phosphate and 5-amino-6-(D-ribitylamino)uracil: step 1/2. Functionally, catalyzes the formation of 6,7-dimethyl-8-ribityllumazine by condensation of 5-amino-6-(D-ribitylamino)uracil with 3,4-dihydroxy-2-butanone 4-phosphate. This is the penultimate step in the biosynthesis of riboflavin. This chain is 6,7-dimethyl-8-ribityllumazine synthase, found in Xanthomonas oryzae pv. oryzae (strain MAFF 311018).